Consider the following 486-residue polypeptide: ATP synthase subunit beta (486 aa).

170–177 (GGAGVGKT) contacts ATP.

The protein belongs to the ATPase alpha/beta chains family. In terms of assembly, F-type ATPases have 2 components, CF(1) - the catalytic core - and CF(0) - the membrane proton channel. CF(1) has five subunits: alpha(3), beta(3), gamma(1), delta(1), epsilon(1). CF(0) has three main subunits: a(1), b(2) and c(9-12). The alpha and beta chains form an alternating ring which encloses part of the gamma chain. CF(1) is attached to CF(0) by a central stalk formed by the gamma and epsilon chains, while a peripheral stalk is formed by the delta and b chains.

It is found in the cell membrane. The catalysed reaction is ATP + H2O + 4 H(+)(in) = ADP + phosphate + 5 H(+)(out). Functionally, produces ATP from ADP in the presence of a proton gradient across the membrane. The catalytic sites are hosted primarily by the beta subunits. In Clavibacter sepedonicus (Clavibacter michiganensis subsp. sepedonicus), this protein is ATP synthase subunit beta.